Reading from the N-terminus, the 360-residue chain is Heat-inducible transcription repressor HrcA (360 aa).

It belongs to the HrcA family.

In terms of biological role, negative regulator of class I heat shock genes (grpE-dnaK-dnaJ and groELS operons). Prevents heat-shock induction of these operons. This is Heat-inducible transcription repressor HrcA from Gloeobacter violaceus (strain ATCC 29082 / PCC 7421).